Here is a 134-residue protein sequence, read N- to C-terminus: Cystatin-1 (134 aa).

A signal peptide spans 1 to 17 (MKAIYLILTVLCGFSAS). One can recognise a Cystatin domain in the interval 21 to 116 (GGWRDKDVDD…CTAIIWTRSW (96 aa)). Residues 65 to 69 (QVVSG) carry the Secondary area of contact motif. Disulfide bonds link Cys83–Cys96 and Cys107–Cys127.

The protein belongs to the cystatin family. In terms of tissue distribution, expressed by the venom gland.

The protein resides in the secreted. Functionally, inhibits various C1 cysteine proteases. This protein has no toxic activity and its function in the venom is unknown. It may play a role as a housekeeping or regulatory protein. This chain is Cystatin-1, found in Chilobrachys guangxiensis (Chinese earth tiger tarantula).